A 669-amino-acid chain; its full sequence is DNA ligase (669 aa).

Residues 34–38 (DAEYD), 83–84 (SL), and glutamate 114 contribute to the NAD(+) site. The active-site N6-AMP-lysine intermediate is lysine 116. Arginine 137, glutamate 171, lysine 287, and lysine 311 together coordinate NAD(+). Zn(2+) contacts are provided by cysteine 405, cysteine 408, cysteine 423, and cysteine 428. Residues 591–669 (NVESYFAGKT…EERFLQELNK (79 aa)) enclose the BRCT domain.

It belongs to the NAD-dependent DNA ligase family. LigA subfamily. Mg(2+) is required as a cofactor. It depends on Mn(2+) as a cofactor.

It carries out the reaction NAD(+) + (deoxyribonucleotide)n-3'-hydroxyl + 5'-phospho-(deoxyribonucleotide)m = (deoxyribonucleotide)n+m + AMP + beta-nicotinamide D-nucleotide.. DNA ligase that catalyzes the formation of phosphodiester linkages between 5'-phosphoryl and 3'-hydroxyl groups in double-stranded DNA using NAD as a coenzyme and as the energy source for the reaction. It is essential for DNA replication and repair of damaged DNA. In Bacillus cereus (strain G9842), this protein is DNA ligase.